A 650-amino-acid polypeptide reads, in one-letter code: A-kinase anchor protein 10, mitochondrial (650 aa).

The N-terminal 16 residues, 1–16 (RALRPDPGPAMSFFRR), are a transit peptide targeting the mitochondrion. Disordered stretches follow at residues 1-45 (RALR…QKST) and 168-192 (SSLA…ESLD). S40 is subject to Phosphoserine. 2 consecutive RGS domains span residues 113-356 (TLEQ…CKYQ) and 366-493 (YLAD…YKYL). Residue S268 is modified to Phosphoserine. The disordered stretch occupies residues 512–535 (LAAQGSGGPPDDPLPGASDPSASQ). Low complexity predominate over residues 525–535 (LPGASDPSASQ). A PKA-RII subunit binding region spans residues 622 to 635 (LAWKIAKMIVSDVM).

It is found in the mitochondrion. It localises to the membrane. The protein resides in the cytoplasm. Its function is as follows. Differentially targeted protein that binds to type I and II regulatory subunits of protein kinase A and anchors them to the mitochondria or the plasma membrane. Although the physiological relevance between PKA and AKAPS with mitochondria is not fully understood, one idea is that BAD, a proapoptotic member, is phosphorylated and inactivated by mitochondria-anchored PKA. It cannot be excluded too that it may facilitate PKA as well as G protein signal transduction, by acting as an adapter for assembling multiprotein complexes. With its RGS domain, it could lead to the interaction to G-alpha proteins, providing a link between the signaling machinery and the downstream kinase. The protein is A-kinase anchor protein 10, mitochondrial (AKAP10) of Sus scrofa (Pig).